We begin with the raw amino-acid sequence, 293 residues long: MAGFGAAPDFNEGSKINASKNQQDEGKMFIGGLSWDTSKKDLTEYLSRFGEVLDCTIKTDPVTGRSRGFGFVLFKDAVSVDKVLETNEHKLDGKLIDPKRAKALKGKEPPKKVFVGGLSPETTEEQIKQYFGGFGEIENIELPIDTKTNERRGFCFVTYTGEEPVKKLLESRFHQIGTGKCEIKAAQPKEVYRQQQQKQQRGGRGAVTGRGGTRGRGRGQGWNQGYNNYYDQNYGGYGNNGSYGDQDYNSYSGYDYSGYSYGYNPGYTEYSGQQSTYGKARGGGNHQNNYQPY.

Positions M1–N21 are disordered. 2 consecutive RRM domains span residues G26–E108 and K111–P188. Disordered stretches follow at residues R193–Q224 and Q274–Y293. Residues G202 to W222 are compositionally biased toward gly residues.

It is found in the nucleus. Its subcellular location is the cytoplasm. In terms of biological role, acts as a transcriptional regulator. Binds DNA and RNA. This is Heterogeneous nuclear ribonucleoprotein D-like-A (hnrnpdl-a) from Xenopus laevis (African clawed frog).